The primary structure comprises 167 residues: Small ribosomal subunit protein uS5 (167 aa).

Positions 19–82 (LTEKVLHINR…EAARKNMISC (64 aa)) constitute an S5 DRBM domain.

Belongs to the universal ribosomal protein uS5 family. Part of the 30S ribosomal subunit. Contacts proteins S4 and S8.

With S4 and S12 plays an important role in translational accuracy. In terms of biological role, located at the back of the 30S subunit body where it stabilizes the conformation of the head with respect to the body. The chain is Small ribosomal subunit protein uS5 from Protochlamydia amoebophila (strain UWE25).